Consider the following 95-residue polypeptide: MAFKFNAEVRSAQGKGASRRLRHNGQIPAIVYGGNEDAVSIVLNHDELNNAQAHDSFYSEVITLVINGKEVAVKVQAMQRHPFKPKLVHIDFKRA.

The protein belongs to the bacterial ribosomal protein bL25 family. In terms of assembly, part of the 50S ribosomal subunit; part of the 5S rRNA/L5/L18/L25 subcomplex. Contacts the 5S rRNA. Binds to the 5S rRNA independently of L5 and L18.

Its function is as follows. This is one of the proteins that binds to the 5S RNA in the ribosome where it forms part of the central protuberance. This chain is Large ribosomal subunit protein bL25, found in Mannheimia succiniciproducens (strain KCTC 0769BP / MBEL55E).